The following is a 1406-amino-acid chain: DNA-directed RNA polymerase subunit beta' (1406 aa).

Cysteine 70, cysteine 72, cysteine 85, and cysteine 88 together coordinate Zn(2+). Mg(2+) contacts are provided by aspartate 460, aspartate 462, and aspartate 464. Residues cysteine 814, cysteine 888, cysteine 895, and cysteine 898 each contribute to the Zn(2+) site.

Belongs to the RNA polymerase beta' chain family. In terms of assembly, the RNAP catalytic core consists of 2 alpha, 1 beta, 1 beta' and 1 omega subunit. When a sigma factor is associated with the core the holoenzyme is formed, which can initiate transcription. Mg(2+) is required as a cofactor. Zn(2+) serves as cofactor.

It catalyses the reaction RNA(n) + a ribonucleoside 5'-triphosphate = RNA(n+1) + diphosphate. Its function is as follows. DNA-dependent RNA polymerase catalyzes the transcription of DNA into RNA using the four ribonucleoside triphosphates as substrates. The chain is DNA-directed RNA polymerase subunit beta' from Yersinia pseudotuberculosis serotype O:1b (strain IP 31758).